The following is a 238-amino-acid chain: MRPSKRAADEMRAISFERGVSKHAEGSCLVKFGDTHVLCTASLEEKVPGWMRNTGKGWVTAEYGMLPRSTGERMRREAAAGKQGGRTQEIQRLIGRSLRAVVDMQALGEMQITVDCDVIQADGGTRTAAITGGWVALHECLRWMEARQMVRVEKVLKDHVAAISCGIYEGVPVLDLDYAEDSVAETDSNFVMTGKGGIVEIQGTAEGVPFSEEEFGALMKLARSGIDRLVSLQKMAVA.

Phosphate is bound by residues arginine 86 and 124 to 126 (GTR).

It belongs to the RNase PH family. Homohexameric ring arranged as a trimer of dimers.

The catalysed reaction is tRNA(n+1) + phosphate = tRNA(n) + a ribonucleoside 5'-diphosphate. Its function is as follows. Phosphorolytic 3'-5' exoribonuclease that plays an important role in tRNA 3'-end maturation. Removes nucleotide residues following the 3'-CCA terminus of tRNAs; can also add nucleotides to the ends of RNA molecules by using nucleoside diphosphates as substrates, but this may not be physiologically important. Probably plays a role in initiation of 16S rRNA degradation (leading to ribosome degradation) during starvation. This Brucella abortus (strain S19) protein is Ribonuclease PH.